The following is a 692-amino-acid chain: Serine/threonine-protein phosphatase PP-Z1 (692 aa).

Disordered regions lie at residues 1 to 309 and 321 to 357; these read MGNS…DIEN and ENVN…PKKF. A lipid anchor (N-myristoyl glycine) is attached at G2. 3 stretches are compositionally biased toward low complexity: residues 32 to 41, 49 to 69, and 91 to 122; these read SHSVKSAKSN, SLPS…STPS, and SSSH…RRSS. The residue at position 49 (S49) is a Phosphoserine. The span at 170–179 shows a compositional bias: acidic residues; that stretch reads LTDDDNDDKD. Position 171 is a phosphothreonine (T171). A compositionally biased stretch (low complexity) spans 190–204; that stretch reads RSSNSRPSSIRSGSV. The segment covering 207–216 has biased composition (basic and acidic residues); sequence RKSDVTHEEP. S209 and S222 each carry phosphoserine. Polar residues-rich tracts occupy residues 217 to 229 and 251 to 267; these read NNGS…QENY and FGSD…NSPG. The residue at position 261 (T261) is a Phosphothreonine. S265 carries the phosphoserine modification. Positions 280–289 are enriched in low complexity; that stretch reads TSNSTSSLNH. A compositionally biased stretch (basic and acidic residues) spans 291 to 303; the sequence is SSRDIYPSKHISN. A compositionally biased stretch (polar residues) spans 321-331; that stretch reads ENVNDKNNNIT. Residues D419, H421, D447, and N479 each contribute to the Mn(2+) site. Catalysis depends on H480, which acts as the Proton donor. Positions 528 and 603 each coordinate Mn(2+). The segment at 672–692 is disordered; the sequence is LANQQQQMMETSITNDNESQQ. Over residues 673-692 the composition is skewed to polar residues; it reads ANQQQQMMETSITNDNESQQ. Residue S690 is modified to Phosphoserine.

This sequence belongs to the PPP phosphatase family. PP-Z subfamily. Interacts with SIS2 and VHS3, which regulate its activity. Mn(2+) is required as a cofactor.

It catalyses the reaction O-phospho-L-seryl-[protein] + H2O = L-seryl-[protein] + phosphate. The enzyme catalyses O-phospho-L-threonyl-[protein] + H2O = L-threonyl-[protein] + phosphate. Inhibited by the regulatory subunits VHS3 and SIS2. In terms of biological role, essential for the maintenance of cell size and integrity in response to osmotic stress. This is Serine/threonine-protein phosphatase PP-Z1 (PPZ1) from Saccharomyces cerevisiae (strain ATCC 204508 / S288c) (Baker's yeast).